The primary structure comprises 158 residues: Transcription elongation factor GreA (158 aa).

The stretch at 46–66 (AEYEAAKERQGFIEGRISELE) forms a coiled coil.

This sequence belongs to the GreA/GreB family.

Functionally, necessary for efficient RNA polymerase transcription elongation past template-encoded arresting sites. The arresting sites in DNA have the property of trapping a certain fraction of elongating RNA polymerases that pass through, resulting in locked ternary complexes. Cleavage of the nascent transcript by cleavage factors such as GreA or GreB allows the resumption of elongation from the new 3'terminus. GreA releases sequences of 2 to 3 nucleotides. The chain is Transcription elongation factor GreA from Neisseria meningitidis serogroup B (strain ATCC BAA-335 / MC58).